The following is a 358-amino-acid chain: Alanine racemase (358 aa).

Lys-35 functions as the Proton acceptor; specific for D-alanine in the catalytic mechanism. Lys-35 is modified (N6-(pyridoxal phosphate)lysine). Arg-130 lines the substrate pocket. The Proton acceptor; specific for L-alanine role is filled by Tyr-255. Met-303 lines the substrate pocket.

It belongs to the alanine racemase family. Requires pyridoxal 5'-phosphate as cofactor.

The catalysed reaction is L-alanine = D-alanine. The protein operates within amino-acid biosynthesis; D-alanine biosynthesis; D-alanine from L-alanine: step 1/1. Functionally, catalyzes the interconversion of L-alanine and D-alanine. May also act on other amino acids. The chain is Alanine racemase (alr) from Shewanella baltica (strain OS185).